Here is a 254-residue protein sequence, read N- to C-terminus: O-antigen biosynthesis glycosyltransferase WbnJ (254 aa).

It belongs to the glycosyltransferase 2 family.

The catalysed reaction is an N-acetyl-alpha-D-galactosaminyl derivative + UDP-alpha-D-galactose = a beta-D-galactosyl-(1-&gt;3)-N-acetyl-alpha-D-galactosaminyl derivative + UDP + H(+). The enzyme catalyses alpha-D-GalNAc-(1-&gt;3)-alpha-D-GalNAc-di-trans,octa-cis-undecaprenyl diphosphate + UDP-alpha-D-galactose = beta-D-Gal-(1-&gt;3)-alpha-D-GalNAc-(1-&gt;3)-alpha-D-GalNAc-di-trans,octa-cis-undecaprenyl diphosphate + UDP + H(+). Its pathway is bacterial outer membrane biogenesis; LPS O-antigen biosynthesis. Its function is as follows. Involved in the assembly of the O-repeating unit during O-antigen biosynthesis. This is O-antigen biosynthesis glycosyltransferase WbnJ from Escherichia coli.